The primary structure comprises 213 residues: Thymidylate kinase (213 aa).

10–17 is an ATP binding site; it reads GLEGAGKT.

The protein belongs to the thymidylate kinase family.

It catalyses the reaction dTMP + ATP = dTDP + ADP. Phosphorylation of dTMP to form dTDP in both de novo and salvage pathways of dTTP synthesis. The protein is Thymidylate kinase of Escherichia coli O81 (strain ED1a).